The sequence spans 1017 residues: NLR family CARD domain-containing protein 4 (1017 aa).

Residues 1–88 (MNFIKENSQV…PLFQELHGLS (88 aa)) form the CARD domain. Positions 95-298 (EEDLDDLAQE…QFGALIAEVG (204 aa)) are nucleotide-binding domain (NBD). Positions 163–476 (SPCIIEGESG…VTKGNGHLQK (314 aa)) constitute an NACHT domain. 169 to 176 (GESGKGKS) serves as a coordination point for ATP. The winged-helix domain (WHD) stretch occupies residues 356–463 (SHTQTTLFCT…RLSSLLTSGE (108 aa)). S533 is modified (phosphoserine). LRR repeat units lie at residues 578–598 (FFRG…LFDF), 649–672 (KQEF…DIKY), 728–751 (VTNL…LTDN), 755–778 (LKNL…KLAE), 780–805 (LTNL…DYIV), 817–840 (EIQL…LHNL), 841–863 (ARLS…ALQQ), 871–895 (LEQL…LLEQ), 904–926 (KLGL…FFEK), 929–956 (LENF…GFEN), 958–978 (KELV…SLVR), and 992–1014 (EVQL…AFKL).

Homooligomer; homooligomerizes following activation of Naip proteins by pathogenic proteins such as S.typhimurium (Salmonella) flagellin or PrgJ. Component of the NLRC4 inflammasome, at least composed of NLRC4, caspase-1 (CASP1) and some NAIP family member. Interacts with EIF2AK2/PKR. Phosphorylated at Ser-533 following infection of macrophages with S.typhimurium (Salmonella). Phosphorylation is essential for NLRC4 inflammasome function to promote caspase-1 activation and pyroptosis. PRKCD phosphorylates Ser-533 in vitro.

The protein resides in the cytoplasm. Its subcellular location is the cytosol. In terms of biological role, key component of inflammasomes that indirectly senses specific proteins from pathogenic bacteria and fungi and responds by assembling an inflammasome complex that promotes caspase-1 activation, cytokine production and macrophage pyroptosis. The NLRC4 inflammasome is activated as part of the innate immune response to a range of intracellular bacteria. This Bos taurus (Bovine) protein is NLR family CARD domain-containing protein 4 (NLRC4).